Reading from the N-terminus, the 694-residue chain is Polyphosphate kinase (694 aa).

Residue N45 coordinates ATP. Mg(2+)-binding residues include R367 and R397. H427 serves as the catalytic Phosphohistidine intermediate. Positions 460, 553, and 580 each coordinate ATP.

The protein belongs to the polyphosphate kinase 1 (PPK1) family. Mg(2+) is required as a cofactor. Post-translationally, an intermediate of this reaction is the autophosphorylated ppk in which a phosphate is covalently linked to a histidine residue through a N-P bond.

The catalysed reaction is [phosphate](n) + ATP = [phosphate](n+1) + ADP. Functionally, catalyzes the reversible transfer of the terminal phosphate of ATP to form a long-chain polyphosphate (polyP). This Campylobacter coli protein is Polyphosphate kinase.